Consider the following 147-residue polypeptide: uncharacterized protein (147 aa).

This is an uncharacterized protein from Ureaplasma parvum serovar 3 (strain ATCC 700970).